A 288-amino-acid chain; its full sequence is 33 kDa chaperonin (288 aa).

2 cysteine pairs are disulfide-bonded: Cys233–Cys235 and Cys267–Cys270.

The protein belongs to the HSP33 family. Post-translationally, under oxidizing conditions two disulfide bonds are formed involving the reactive cysteines. Under reducing conditions zinc is bound to the reactive cysteines and the protein is inactive.

It is found in the cytoplasm. Redox regulated molecular chaperone. Protects both thermally unfolding and oxidatively damaged proteins from irreversible aggregation. Plays an important role in the bacterial defense system toward oxidative stress. The chain is 33 kDa chaperonin from Actinobacillus succinogenes (strain ATCC 55618 / DSM 22257 / CCUG 43843 / 130Z).